Here is a 107-residue protein sequence, read N- to C-terminus: Large ribosomal subunit protein uL24 (107 aa).

Belongs to the universal ribosomal protein uL24 family. As to quaternary structure, part of the 50S ribosomal subunit.

Its function is as follows. One of two assembly initiator proteins, it binds directly to the 5'-end of the 23S rRNA, where it nucleates assembly of the 50S subunit. In terms of biological role, one of the proteins that surrounds the polypeptide exit tunnel on the outside of the subunit. This Neisseria gonorrhoeae (strain ATCC 700825 / FA 1090) protein is Large ribosomal subunit protein uL24.